A 264-amino-acid polypeptide reads, in one-letter code: uncharacterized protein (264 aa).

Positions 19 to 45 (AQEESMEQLKDINTKIDNSEKKISLEN) form a coiled coil.

This is an uncharacterized protein from Acanthamoeba polyphaga mimivirus (APMV).